The chain runs to 154 residues: Ubiquitin-conjugating enzyme E2 L3 (154 aa).

The region spanning 2–149 (AASRRLMKEL…AEEFTKKYGE (148 aa)) is the UBC core domain. Catalysis depends on cysteine 86, which acts as the Glycyl thioester intermediate. Lysine 131 bears the N6-acetyllysine mark.

The protein belongs to the ubiquitin-conjugating enzyme family. Interacts with PRKN; involved in ubiquitination and degradation of misfolded proteins. Interacts with UBE3A. Interacts with CCNB1IP1, CBL, ZAP70, RNF19A, RNF19B and RNF144B. Interacts with ARIH1. Interacts with ARIH2 (via RING-type 1). Interacts with NCOA1; they functionally interact to regulate progesterone receptor transcriptional activity. Interacts with NDFIP1 (via N-terminus); the interaction mediates recruitment of UBE2L3 to ITCH and causes MAP3K7 ubiquitination. In terms of processing, ubiquitinated. The alteration of UBE2L3 protein levels during the S-phase of the cell cycle is due to ubiquitin-dependent proteasomal degradation. Autoubiquitinated in vitro.

It is found in the nucleus. The protein resides in the cytoplasm. The catalysed reaction is S-ubiquitinyl-[E1 ubiquitin-activating enzyme]-L-cysteine + [E2 ubiquitin-conjugating enzyme]-L-cysteine = [E1 ubiquitin-activating enzyme]-L-cysteine + S-ubiquitinyl-[E2 ubiquitin-conjugating enzyme]-L-cysteine.. The protein operates within protein modification; protein ubiquitination. Functionally, ubiquitin-conjugating enzyme E2 that specifically acts with HECT-type and RBR family E3 ubiquitin-protein ligases. Does not function with most RING-containing E3 ubiquitin-protein ligases because it lacks intrinsic E3-independent reactivity with lysine: in contrast, it has activity with the RBR family E3 enzymes, such as PRKN, RNF31 and ARIH1, that function like RING-HECT hybrids. Accepts ubiquitin from the E1 complex and catalyzes its covalent attachment to other proteins. Mediates ubiquitination by the CUL9-RBX1 complex. In vitro catalyzes 'Lys-11'-linked polyubiquitination. Involved in the selective degradation of short-lived and abnormal proteins. Down-regulated during the S-phase it is involved in progression through the cell cycle. Regulates nuclear hormone receptors transcriptional activity. May play a role in myelopoiesis. This chain is Ubiquitin-conjugating enzyme E2 L3 (UBE2L3), found in Pongo abelii (Sumatran orangutan).